The chain runs to 377 residues: UDP-N-acetylglucosamine--N-acetylmuramyl-(pentapeptide) pyrophosphoryl-undecaprenol N-acetylglucosamine transferase (377 aa).

UDP-N-acetyl-alpha-D-glucosamine is bound by residues 29–31 (TAG), Asn142, Arg179, Ser213, and Gln308.

It belongs to the glycosyltransferase 28 family. MurG subfamily.

Its subcellular location is the cell membrane. The enzyme catalyses di-trans,octa-cis-undecaprenyl diphospho-N-acetyl-alpha-D-muramoyl-L-alanyl-D-glutamyl-meso-2,6-diaminopimeloyl-D-alanyl-D-alanine + UDP-N-acetyl-alpha-D-glucosamine = di-trans,octa-cis-undecaprenyl diphospho-[N-acetyl-alpha-D-glucosaminyl-(1-&gt;4)]-N-acetyl-alpha-D-muramoyl-L-alanyl-D-glutamyl-meso-2,6-diaminopimeloyl-D-alanyl-D-alanine + UDP + H(+). The protein operates within cell wall biogenesis; peptidoglycan biosynthesis. Its function is as follows. Cell wall formation. Catalyzes the transfer of a GlcNAc subunit on undecaprenyl-pyrophosphoryl-MurNAc-pentapeptide (lipid intermediate I) to form undecaprenyl-pyrophosphoryl-MurNAc-(pentapeptide)GlcNAc (lipid intermediate II). The chain is UDP-N-acetylglucosamine--N-acetylmuramyl-(pentapeptide) pyrophosphoryl-undecaprenol N-acetylglucosamine transferase from Saccharopolyspora erythraea (strain ATCC 11635 / DSM 40517 / JCM 4748 / NBRC 13426 / NCIMB 8594 / NRRL 2338).